The primary structure comprises 261 residues: uncharacterized protein (261 aa).

Transmembrane regions (helical) follow at residues 15–35 (WYSV…IIVC), 87–107 (VYLI…IRNA), and 131–151 (LLLY…YFLI). Basic and acidic residues predominate over residues 234-246 (LEEKKAKRRQNAE). The disordered stretch occupies residues 234–261 (LEEKKAKRRQNAERRKKRREIAMEQREQ).

Its subcellular location is the membrane. This is an uncharacterized protein from Caenorhabditis elegans.